Reading from the N-terminus, the 217-residue chain is Adenylate kinase (217 aa).

Residue 11 to 16 (GAGKGT) coordinates ATP. The tract at residues 31–60 (STGDMFREAMANETPVGLEAKSYIDKGNLV) is NMP. Residues T32, R37, 58-60 (NLV), 86-89 (GFPR), and Q93 each bind AMP. An LID region spans residues 127-165 (ARYICKKCGATYNKISNPTKVEGTCDRCGGHEFFQREDD). Residue R128 participates in ATP binding. Zn(2+) is bound by residues C131 and C134. 137–138 (TY) serves as a coordination point for ATP. Zn(2+) is bound by residues C151 and C154. AMP is bound by residues R162 and R173. An ATP-binding site is contributed by Q201.

The protein belongs to the adenylate kinase family. As to quaternary structure, monomer.

It localises to the cytoplasm. It carries out the reaction AMP + ATP = 2 ADP. Its pathway is purine metabolism; AMP biosynthesis via salvage pathway; AMP from ADP: step 1/1. In terms of biological role, catalyzes the reversible transfer of the terminal phosphate group between ATP and AMP. Plays an important role in cellular energy homeostasis and in adenine nucleotide metabolism. The polypeptide is Adenylate kinase (Lactobacillus johnsonii (strain CNCM I-12250 / La1 / NCC 533)).